Here is a 340-residue protein sequence, read N- to C-terminus: Organic solute transporter subunit alpha (340 aa).

At 1–48 (MEPGRTQIKLDPRYTADLLEVLKTNYGIPSACFSQPPTAAQLLRALGP) the chain is on the extracellular side. The helical transmembrane segment at 49–69 (VELALTSILTLLALGSIAIFL) threads the bilayer. Residues 70 to 87 (EDAVYLYKNTLCPIKRRT) are Cytoplasmic-facing. Residues 88–108 (LLWKSSAPTVVSVLCCFGLWI) traverse the membrane as a helical segment. The Extracellular segment spans residues 109 to 118 (PRSLVLVEMT). The helical transmembrane segment at 119 to 139 (ITSFYAVCFYLLMLVMVEGFG) threads the bilayer. Topologically, residues 140–181 (GKEAVLRTLRDTPMMVHTGPCCCCCPCCPRLLLTRKKLQLLM) are cytoplasmic. A helical membrane pass occupies residues 182–202 (LGPFQYAFLKITLTLVGLFLV). The Extracellular segment spans residues 203–218 (PDGIYDPADISEGSTA). The chain crosses the membrane as a helical span at residues 219-239 (LWINTFLGVSTLLALWTLGII). Residues 240–255 (SRQARLHLGEQNMGAK) lie on the Cytoplasmic side of the membrane. A helical membrane pass occupies residues 256–276 (FALFQVLLILTALQPSIFSVL). Topologically, residues 277-294 (ANGGQIACSPPYSSKTRS) are extracellular. Residues 295–317 (QVMNCHLLILETFLMTVLTRMYY) form a helical membrane-spanning segment. Residues 318-340 (RRKDHKVGYETFSSPDLDLNLKA) are Cytoplasmic-facing. Phosphoserine is present on serine 330.

The protein belongs to the OST-alpha family. As to quaternary structure, interacts with SLC51B. The Ost-alpha/Ost-beta complex is a heterodimer composed of alpha (SLC51A) and beta (SLC51B) subunit. Widely expressed with a high expression in ileum. Expressed in testis, colon, liver, small intestine, kidney, ovary and adrenal gland; and at low levels in heart, lung, brain, pituitary, thyroid gland, uterus, prostate, mammary gland and fat.

It localises to the cell membrane. It is found in the endoplasmic reticulum membrane. The catalysed reaction is taurocholate(out) = taurocholate(in). The enzyme catalyses estrone 3-sulfate(out) = estrone 3-sulfate(in). It catalyses the reaction dehydroepiandrosterone 3-sulfate(out) = dehydroepiandrosterone 3-sulfate(in). It carries out the reaction tauroursodeoxycholate(out) = tauroursodeoxycholate(in). The catalysed reaction is glycoursodeoxycholate(out) = glycoursodeoxycholate(in). The enzyme catalyses glycocholate(out) = glycocholate(in). It catalyses the reaction taurochenodeoxycholate(out) = taurochenodeoxycholate(in). It carries out the reaction glycochenodeoxycholate(out) = glycochenodeoxycholate(in). The catalysed reaction is taurodeoxycholate(out) = taurodeoxycholate(in). The enzyme catalyses glycodeoxycholate(out) = glycodeoxycholate(in). It catalyses the reaction prostaglandin E2(out) = prostaglandin E2(in). In terms of biological role, essential component of the Ost-alpha/Ost-beta complex, a heterodimer that acts as the intestinal basolateral transporter responsible for bile acid export from enterocytes into portal blood. Efficiently transports the major species of bile acids (taurocholate). Taurine conjugates are transported more efficiently across the basolateral membrane than glycine-conjugated bile acids. Can also transport steroids such as estrone 3-sulfate and dehydroepiandrosterone 3-sulfate, therefore playing a role in the enterohepatic circulation of sterols. Able to transport eicosanoids such as prostaglandin E2. The sequence is that of Organic solute transporter subunit alpha (SLC51A) from Homo sapiens (Human).